The primary structure comprises 709 residues: DNA topoisomerase 1 (709 aa).

The Toprim domain maps to 3 to 127 (KNLVVIESPN…KCKRITFNEI (125 aa)). Glu9 and Asp95 together coordinate Mg(2+). The 456-residue stretch at 143–598 (DLNWVESQFA…FWTNFKSDVK (456 aa)) folds into the Topo IA-type catalytic domain. An interaction with DNA region spans residues 176–181 (SAGRVQ). The O-(5'-phospho-DNA)-tyrosine intermediate role is filled by Tyr334. 2 consecutive C4-type zinc fingers follow at residues 618 to 646 (CPKC…FPKC) and 667 to 696 (CPEC…FPNC).

It belongs to the type IA topoisomerase family. In terms of assembly, monomer. It depends on Mg(2+) as a cofactor.

It carries out the reaction ATP-independent breakage of single-stranded DNA, followed by passage and rejoining.. Functionally, releases the supercoiling and torsional tension of DNA, which is introduced during the DNA replication and transcription, by transiently cleaving and rejoining one strand of the DNA duplex. Introduces a single-strand break via transesterification at a target site in duplex DNA. The scissile phosphodiester is attacked by the catalytic tyrosine of the enzyme, resulting in the formation of a DNA-(5'-phosphotyrosyl)-enzyme intermediate and the expulsion of a 3'-OH DNA strand. The free DNA strand then undergoes passage around the unbroken strand, thus removing DNA supercoils. Finally, in the religation step, the DNA 3'-OH attacks the covalent intermediate to expel the active-site tyrosine and restore the DNA phosphodiester backbone. This chain is DNA topoisomerase 1, found in Mycoplasma genitalium (strain ATCC 33530 / DSM 19775 / NCTC 10195 / G37) (Mycoplasmoides genitalium).